The following is a 463-amino-acid chain: Sodium-coupled neutral amino acid transporter 7 (463 aa).

Phosphoserine is present on S28. 11 consecutive transmembrane segments (helical) span residues 56 to 76 (AVFI…PAAF), 82 to 102 (VAAG…GLVI), 130 to 150 (LCEI…LIII), 179 to 199 (FTIS…KEIG), 206 to 226 (SLSV…YIWP), 240 to 260 (ASWM…QCHV), 283 to 303 (AAMV…FLTF), 320 to 340 (VAVA…YPIL), 372 to 392 (VLQT…IPDI), 396 to 416 (ISVI…LCLI), and 429 to 449 (ASWW…AFIF).

It belongs to the amino acid/polyamine transporter 2 family. In terms of assembly, interacts with the mTORC1 complex; this interaction mediates the recruitment of mTORC1 to the lysosome and its subsequent activation.

It is found in the lysosome membrane. The protein resides in the cell projection. It localises to the axon. It catalyses the reaction L-asparagine(in) + Na(+)(in) = L-asparagine(out) + Na(+)(out). It carries out the reaction L-glutamine(in) + Na(+)(in) = L-glutamine(out) + Na(+)(out). Its function is as follows. Symporter that selectively cotransports sodium ions and amino acids, such as L-glutamine and L-asparagine from the lysosome into the cytoplasm and may participates in mTORC1 activation. The transport activity requires an acidic lysosomal lumen. The sequence is that of Sodium-coupled neutral amino acid transporter 7 from Rattus norvegicus (Rat).